The sequence spans 350 residues: Serine-threonine kinase receptor-associated protein (350 aa).

WD repeat units follow at residues G12–L56, G57–T96, A98–D137, G141–A179, L180–E212, E221–K262, and G263–L302. The disordered stretch occupies residues E311–A350. Residues S335–A350 are compositionally biased toward polar residues.

Belongs to the WD repeat STRAP family. Part of the core SMN complex.

It localises to the cytoplasm. The protein localises to the nucleus. Functionally, the SMN complex catalyzes the assembly of small nuclear ribonucleoproteins (snRNPs), the building blocks of the spliceosome, and thereby plays an important role in the splicing of cellular pre-mRNAs. Most spliceosomal snRNPs contain a common set of Sm proteins SNRPB, SNRPD1, SNRPD2, SNRPD3, SNRPE, SNRPF and SNRPG that assemble in a heptameric protein ring on the Sm site of the small nuclear RNA to form the core snRNP (Sm core). In the cytosol, the Sm proteins SNRPD1, SNRPD2, SNRPE, SNRPF and SNRPG are trapped in an inactive 6S pICln-Sm complex by the chaperone CLNS1A that controls the assembly of the core snRNP. To assemble core snRNPs, the SMN complex accepts the trapped 5Sm proteins from CLNS1A forming an intermediate. Binding of snRNA inside 5Sm triggers eviction of the SMN complex, thereby allowing binding of SNRPD3 and SNRPB to complete assembly of the core snRNP. STRAP plays a role in the cellular distribution of the SMN complex. This is Serine-threonine kinase receptor-associated protein (STRAP) from Gallus gallus (Chicken).